Reading from the N-terminus, the 86-residue chain is Large ribosomal subunit protein eL20 (86 aa).

The protein belongs to the eukaryotic ribosomal protein eL20 family. As to quaternary structure, part of the 50S ribosomal subunit. Binds 23S rRNA.

This chain is Large ribosomal subunit protein eL20, found in Sulfolobus acidocaldarius (strain ATCC 33909 / DSM 639 / JCM 8929 / NBRC 15157 / NCIMB 11770).